Reading from the N-terminus, the 82-residue chain is Putative Fe(2+) transport protein A (82 aa).

This sequence belongs to the FeoA family.

Might be involved in Fe(2+) ion uptake. In Leptolyngbya boryana (Plectonema boryanum), this protein is Putative Fe(2+) transport protein A.